The primary structure comprises 110 residues: Minor capsid protein VP2 (110 aa).

Belongs to the vesivirus VP2 protein family. In terms of assembly, homooligomer. The portal-like structure consists in 12 copies of VP2. Interacts with capsid protein VP1.

The protein localises to the virion. Its subcellular location is the host cytoplasm. Functionally, minor structural protein that forms a portal-like structure at a unique three-fold axis of symmetry, following binding to the host receptor. The channel formed by VP2 may allow the delivery of the viral genome through the host endosomal membrane. The chain is Minor capsid protein VP2 from Otariidae (fur seals &amp; sea lions).